A 434-amino-acid polypeptide reads, in one-letter code: Glutamate-1-semialdehyde 2,1-aminomutase (434 aa).

Residue Lys-274 is modified to N6-(pyridoxal phosphate)lysine.

This sequence belongs to the class-III pyridoxal-phosphate-dependent aminotransferase family. HemL subfamily. Homodimer. Requires pyridoxal 5'-phosphate as cofactor.

It is found in the cytoplasm. The catalysed reaction is (S)-4-amino-5-oxopentanoate = 5-aminolevulinate. The protein operates within porphyrin-containing compound metabolism; protoporphyrin-IX biosynthesis; 5-aminolevulinate from L-glutamyl-tRNA(Glu): step 2/2. This Acidovorax sp. (strain JS42) protein is Glutamate-1-semialdehyde 2,1-aminomutase.